A 583-amino-acid polypeptide reads, in one-letter code: Probable GTP diphosphokinase CRSH, chloroplastic (583 aa).

The N-terminal 58 residues, 1–58 (MSVIRPSPIPIPRCRSQVLHRRLYSIQLIQRRRRRWNPRSEVEDTAIESTARSPEAAG), are a transit peptide targeting the chloroplast. The HD domain maps to 112 to 212 (PLSKALSLSI…MDLVSKLDEM (101 aa)). 2 consecutive EF-hand domains span residues 470–505 (TTTNQRDRVFCLLDKNGDGMISIEELMEVMEELGAP) and 507–539 (EDAEEMMQLLDSNSDGSLSSDEFDTFQKQVEFM). 10 residues coordinate Ca(2+): Asp483, Asn485, Asp487, Met489, Glu494, Asp517, Asn519, Asp521, Ser523, and Glu528.

This sequence belongs to the RelA/SpoT family. As to expression, expressed in shoots, cotyledons, rosette and cauline leaves, stems, sepals, pistils and siliques.

The protein localises to the plastid. It is found in the chloroplast. The enzyme catalyses GTP + ATP = guanosine 3'-diphosphate 5'-triphosphate + AMP. Activated by calcium. Its function is as follows. Possesses calcium-dependent ppGpp (guanosine 3'-diphosphate 5'-diphosphate) synthetase activity in vitro and is able to functionally complement E.coli relA mutants. Plays an important role in the timing adjustment of pistil and pollen maturation required for successful pollination. May be involved in a rapid plant ppGpp-mediated response to pathogens and other stresses. This chain is Probable GTP diphosphokinase CRSH, chloroplastic (CRSH), found in Arabidopsis thaliana (Mouse-ear cress).